Here is a 264-residue protein sequence, read N- to C-terminus: NAD-capped RNA hydrolase NudC (264 aa).

The Zn(2+) site is built by Cys-99 and Cys-102. Residue Glu-112 participates in substrate binding. Residues Cys-117 and Cys-120 each contribute to the Zn(2+) site. Residue Tyr-125 participates in substrate binding. Residues 126–253 (PVICPSIIVA…TIARKLIHAT (128 aa)) enclose the Nudix hydrolase domain. A divalent metal cation contacts are provided by Ala-162, Glu-178, and Glu-182. The Nudix box motif lies at 163-184 (GFVEVGETFEQAVQREVFEETG). Substrate is bound at residue 196 to 203 (QPWAFPNS). Glu-223 serves as a coordination point for a divalent metal cation. Residue Ala-246 coordinates substrate.

This sequence belongs to the Nudix hydrolase family. NudC subfamily. In terms of assembly, homodimer. Requires Mg(2+) as cofactor. Mn(2+) is required as a cofactor. The cofactor is Zn(2+).

It carries out the reaction a 5'-end NAD(+)-phospho-ribonucleoside in mRNA + H2O = a 5'-end phospho-adenosine-phospho-ribonucleoside in mRNA + beta-nicotinamide D-ribonucleotide + 2 H(+). The enzyme catalyses NAD(+) + H2O = beta-nicotinamide D-ribonucleotide + AMP + 2 H(+). The catalysed reaction is NADH + H2O = reduced beta-nicotinamide D-ribonucleotide + AMP + 2 H(+). Its function is as follows. mRNA decapping enzyme that specifically removes the nicotinamide adenine dinucleotide (NAD) cap from a subset of mRNAs by hydrolyzing the diphosphate linkage to produce nicotinamide mononucleotide (NMN) and 5' monophosphate mRNA. The NAD-cap is present at the 5'-end of some mRNAs and stabilizes RNA against 5'-processing. Has preference for mRNAs with a 5'-end purine. Catalyzes the hydrolysis of a broad range of dinucleotide pyrophosphates. The sequence is that of NAD-capped RNA hydrolase NudC from Haemophilus influenzae (strain PittGG).